The primary structure comprises 343 residues: DNA repair and recombination protein RadA (343 aa).

Residue 107-114 (GEFGAGKS) coordinates ATP.

It belongs to the eukaryotic RecA-like protein family.

Involved in DNA repair and in homologous recombination. Binds and assemble on single-stranded DNA to form a nucleoprotein filament. Hydrolyzes ATP in a ssDNA-dependent manner and promotes DNA strand exchange between homologous DNA molecules. This is DNA repair and recombination protein RadA from Halobacterium salinarum (strain ATCC 29341 / DSM 671 / R1).